The following is a 305-amino-acid chain: Ornithine carbamoyltransferase, catabolic (305 aa).

Carbamoyl phosphate contacts are provided by residues 50–53, Gln77, Arg101, and 128–131; these read STRT and HPLQ. L-ornithine contacts are provided by residues Asn159, Asp223, and 227–228; that span reads SM. Carbamoyl phosphate contacts are provided by residues 263 to 264 and Arg291; that span reads CL.

This sequence belongs to the aspartate/ornithine carbamoyltransferase superfamily. OTCase family.

It localises to the cytoplasm. It carries out the reaction carbamoyl phosphate + L-ornithine = L-citrulline + phosphate + H(+). The protein operates within amino-acid degradation; L-arginine degradation via ADI pathway; carbamoyl phosphate from L-arginine: step 2/2. Reversibly catalyzes the transfer of the carbamoyl group from carbamoyl phosphate (CP) to the N(epsilon) atom of ornithine (ORN) to produce L-citrulline. This chain is Ornithine carbamoyltransferase, catabolic, found in Thermoplasma acidophilum (strain ATCC 25905 / DSM 1728 / JCM 9062 / NBRC 15155 / AMRC-C165).